An 87-amino-acid polypeptide reads, in one-letter code: RNA-binding protein Hfq (87 aa).

Residues aspartate 9–valine 68 form the Sm domain. The interval alanine 65–aspartate 87 is disordered. The span at histidine 71–aspartate 87 shows a compositional bias: basic and acidic residues.

It belongs to the Hfq family. As to quaternary structure, homohexamer.

In terms of biological role, RNA chaperone that binds small regulatory RNA (sRNAs) and mRNAs to facilitate mRNA translational regulation in response to envelope stress, environmental stress and changes in metabolite concentrations. Also binds with high specificity to tRNAs. This is RNA-binding protein Hfq from Vibrio parahaemolyticus serotype O3:K6 (strain RIMD 2210633).